Here is an 89-residue protein sequence, read N- to C-terminus: Ixosin-B (89 aa).

An N-terminal signal peptide occupies residues methionine 1–alanine 26. The propeptide occupies serine 27–glycine 57. The tract at residues serine 68–tyrosine 89 is disordered. Positions serine 76–tyrosine 89 are enriched in basic and acidic residues.

Has antifungal activity against C.albicans. Has antibacterial activity against the Gram-positive bacterium S.aureus and the Gram-negative bacterium E.coli. Lacks hemolytic activity against rabbit erythrocytes. In Ixodes sinensis (Hard tick), this protein is Ixosin-B.